The chain runs to 758 residues: 5-methyltetrahydropteroyltriglutamate--homocysteine methyltransferase (758 aa).

Residues 17 to 20 (RELK) and Lys-110 contribute to the 5-methyltetrahydropteroyltri-L-glutamate site. L-homocysteine-binding positions include 428–430 (IGS) and Glu-481. Residues 428–430 (IGS) and Glu-481 contribute to the L-methionine site. 5-methyltetrahydropteroyltri-L-glutamate-binding positions include 512–513 (RC) and Trp-558. Residue Asp-596 participates in L-homocysteine binding. Asp-596 provides a ligand contact to L-methionine. Glu-602 contributes to the 5-methyltetrahydropteroyltri-L-glutamate binding site. The Zn(2+) site is built by His-638, Cys-640, and Glu-662. His-691 functions as the Proton donor in the catalytic mechanism. A Zn(2+)-binding site is contributed by Cys-723.

The protein belongs to the vitamin-B12 independent methionine synthase family. The cofactor is Zn(2+).

The catalysed reaction is 5-methyltetrahydropteroyltri-L-glutamate + L-homocysteine = tetrahydropteroyltri-L-glutamate + L-methionine. It participates in amino-acid biosynthesis; L-methionine biosynthesis via de novo pathway; L-methionine from L-homocysteine (MetE route): step 1/1. In terms of biological role, catalyzes the transfer of a methyl group from 5-methyltetrahydrofolate to homocysteine resulting in methionine formation. The polypeptide is 5-methyltetrahydropteroyltriglutamate--homocysteine methyltransferase (Thermosynechococcus vestitus (strain NIES-2133 / IAM M-273 / BP-1)).